A 156-amino-acid polypeptide reads, in one-letter code: Transcription antitermination protein NusB (156 aa).

It belongs to the NusB family.

Functionally, involved in transcription antitermination. Required for transcription of ribosomal RNA (rRNA) genes. Binds specifically to the boxA antiterminator sequence of the ribosomal RNA (rrn) operons. The chain is Transcription antitermination protein NusB from Bartonella quintana (strain Toulouse) (Rochalimaea quintana).